The chain runs to 322 residues: Tropinone reductase homolog At2g29260, chloroplastic (322 aa).

Residues 1-61 (MVLDMASHLY…YASQSSIAIT (61 aa)) constitute a chloroplast transit peptide. 74 to 98 (LVTGGTRGIGRAIVEELAGLGAEVH) contributes to the NADP(+) binding site. Position 207 (Ser-207) interacts with substrate.

This sequence belongs to the short-chain dehydrogenases/reductases (SDR) family. SDR65C subfamily.

The protein localises to the plastid. Its subcellular location is the chloroplast. This is Tropinone reductase homolog At2g29260, chloroplastic from Arabidopsis thaliana (Mouse-ear cress).